The following is a 169-amino-acid chain: ATP synthase subunit b (169 aa).

Residues 12-32 (HIYLGNALWYLICFAILLLLI) form a helical membrane-spanning segment.

It belongs to the ATPase B chain family. F-type ATPases have 2 components, F(1) - the catalytic core - and F(0) - the membrane proton channel. F(1) has five subunits: alpha(3), beta(3), gamma(1), delta(1), epsilon(1). F(0) has three main subunits: a(1), b(2) and c(10-14). The alpha and beta chains form an alternating ring which encloses part of the gamma chain. F(1) is attached to F(0) by a central stalk formed by the gamma and epsilon chains, while a peripheral stalk is formed by the delta and b chains.

It is found in the cell membrane. Its function is as follows. F(1)F(0) ATP synthase produces ATP from ADP in the presence of a proton or sodium gradient. F-type ATPases consist of two structural domains, F(1) containing the extramembraneous catalytic core and F(0) containing the membrane proton channel, linked together by a central stalk and a peripheral stalk. During catalysis, ATP synthesis in the catalytic domain of F(1) is coupled via a rotary mechanism of the central stalk subunits to proton translocation. Component of the F(0) channel, it forms part of the peripheral stalk, linking F(1) to F(0). The chain is ATP synthase subunit b from Lactobacillus helveticus (strain DPC 4571).